The primary structure comprises 342 residues: Phosphoribosylformylglycinamidine cyclo-ligase (342 aa).

It belongs to the AIR synthase family.

The protein localises to the cytoplasm. The catalysed reaction is 2-formamido-N(1)-(5-O-phospho-beta-D-ribosyl)acetamidine + ATP = 5-amino-1-(5-phospho-beta-D-ribosyl)imidazole + ADP + phosphate + H(+). It participates in purine metabolism; IMP biosynthesis via de novo pathway; 5-amino-1-(5-phospho-D-ribosyl)imidazole from N(2)-formyl-N(1)-(5-phospho-D-ribosyl)glycinamide: step 2/2. The polypeptide is Phosphoribosylformylglycinamidine cyclo-ligase (Staphylococcus aureus (strain Mu3 / ATCC 700698)).